The primary structure comprises 88 residues: Putative septation protein SpoVG (88 aa).

It belongs to the SpoVG family.

Could be involved in septation. The chain is Putative septation protein SpoVG from Desulforudis audaxviator (strain MP104C).